The sequence spans 615 residues: DNA mismatch repair protein MutL (615 aa).

The protein belongs to the DNA mismatch repair MutL/HexB family.

This protein is involved in the repair of mismatches in DNA. It is required for dam-dependent methyl-directed DNA mismatch repair. May act as a 'molecular matchmaker', a protein that promotes the formation of a stable complex between two or more DNA-binding proteins in an ATP-dependent manner without itself being part of a final effector complex. The protein is DNA mismatch repair protein MutL of Parabacteroides distasonis (strain ATCC 8503 / DSM 20701 / CIP 104284 / JCM 5825 / NCTC 11152).